The chain runs to 130 residues: Small ribosomal subunit protein uS9 (130 aa).

Belongs to the universal ribosomal protein uS9 family.

The polypeptide is Small ribosomal subunit protein uS9 (Serratia proteamaculans (strain 568)).